The chain runs to 461 residues: Acetylcholine receptor subunit alpha (461 aa).

A signal peptide spans 1–24 (MILCSYWHVGLVLLLFSCCGLVLG). The Extracellular segment spans residues 25–234 (SEHETRLVAN…ITYHFIMQRI (210 aa)). Cystine bridges form between Cys-152–Cys-166 and Cys-216–Cys-217. Residue Asn-165 is glycosylated (N-linked (GlcNAc...) asparagine). 3 helical membrane-spanning segments follow: residues 235-259 (PLYFVVNVIIPCLLFSFLTGLVFYL), 267-285 (MTLSISVLLSLTVFLLVIV), and 301-320 (YMLFTMIFVISSIIITVVVI). Over 321 to 432 (NTHHRSPSTH…WKYVAMVIDH (112 aa)) the chain is Cytoplasmic. A helical transmembrane segment spans residues 433–451 (ILLCVFMLICIIGTVSVFA).

This sequence belongs to the ligand-gated ion channel (TC 1.A.9) family. Acetylcholine receptor (TC 1.A.9.1) subfamily. Alpha-1/CHRNA1 sub-subfamily. Pentamer of two alpha chains, and one each of the beta, delta, and gamma chains.

It is found in the postsynaptic cell membrane. Its subcellular location is the cell membrane. The enzyme catalyses K(+)(in) = K(+)(out). It carries out the reaction Na(+)(in) = Na(+)(out). Upon acetylcholine binding, the AChR responds by an extensive change in conformation that affects all subunits and leads to opening of an ion-conducting channel across the plasma membrane. The polypeptide is Acetylcholine receptor subunit alpha (CHRNA1) (Tetronarce californica (Pacific electric ray)).